A 204-amino-acid chain; its full sequence is Thiamine-phosphate synthase (204 aa).

4-amino-2-methyl-5-(diphosphooxymethyl)pyrimidine contacts are provided by residues 32-36 (QLRMK) and aspartate 64. 2 residues coordinate Mg(2+): aspartate 65 and aspartate 84. Threonine 103 is a 4-amino-2-methyl-5-(diphosphooxymethyl)pyrimidine binding site. 129 to 131 (TTT) contributes to the 2-[(2R,5Z)-2-carboxy-4-methylthiazol-5(2H)-ylidene]ethyl phosphate binding site. Lysine 132 contributes to the 4-amino-2-methyl-5-(diphosphooxymethyl)pyrimidine binding site. Glycine 165 provides a ligand contact to 2-[(2R,5Z)-2-carboxy-4-methylthiazol-5(2H)-ylidene]ethyl phosphate.

Belongs to the thiamine-phosphate synthase family. Mg(2+) is required as a cofactor.

It carries out the reaction 2-[(2R,5Z)-2-carboxy-4-methylthiazol-5(2H)-ylidene]ethyl phosphate + 4-amino-2-methyl-5-(diphosphooxymethyl)pyrimidine + 2 H(+) = thiamine phosphate + CO2 + diphosphate. The catalysed reaction is 2-(2-carboxy-4-methylthiazol-5-yl)ethyl phosphate + 4-amino-2-methyl-5-(diphosphooxymethyl)pyrimidine + 2 H(+) = thiamine phosphate + CO2 + diphosphate. The enzyme catalyses 4-methyl-5-(2-phosphooxyethyl)-thiazole + 4-amino-2-methyl-5-(diphosphooxymethyl)pyrimidine + H(+) = thiamine phosphate + diphosphate. Its pathway is cofactor biosynthesis; thiamine diphosphate biosynthesis; thiamine phosphate from 4-amino-2-methyl-5-diphosphomethylpyrimidine and 4-methyl-5-(2-phosphoethyl)-thiazole: step 1/1. In terms of biological role, condenses 4-methyl-5-(beta-hydroxyethyl)thiazole monophosphate (THZ-P) and 2-methyl-4-amino-5-hydroxymethyl pyrimidine pyrophosphate (HMP-PP) to form thiamine monophosphate (TMP). The sequence is that of Thiamine-phosphate synthase from Bacteroides fragilis (strain YCH46).